The chain runs to 189 residues: UPF0301 protein RC0043 (189 aa).

The protein belongs to the UPF0301 (AlgH) family.

This is UPF0301 protein RC0043 from Rickettsia conorii (strain ATCC VR-613 / Malish 7).